The sequence spans 208 residues: Thymidylate kinase (208 aa).

10-17 (GPEGSGKT) contacts ATP.

Belongs to the thymidylate kinase family.

The enzyme catalyses dTMP + ATP = dTDP + ADP. In terms of biological role, phosphorylation of dTMP to form dTDP in both de novo and salvage pathways of dTTP synthesis. The chain is Thymidylate kinase from Bacillus cereus (strain ATCC 10987 / NRS 248).